A 147-amino-acid polypeptide reads, in one-letter code: Large ribosomal subunit protein bL9 (147 aa).

It belongs to the bacterial ribosomal protein bL9 family.

Its function is as follows. Binds to the 23S rRNA. In Campylobacter fetus subsp. fetus (strain 82-40), this protein is Large ribosomal subunit protein bL9.